Reading from the N-terminus, the 131-residue chain is uncharacterized protein (131 aa).

A signal peptide spans 1-19 (MRESLFIIFFQFVCHSSNS). 2 consecutive transmembrane segments (helical) span residues 33–53 (PLLT…ALFF) and 111–131 (VSFN…FFLF).

The protein localises to the membrane. This is an uncharacterized protein from Saccharomyces cerevisiae (strain ATCC 204508 / S288c) (Baker's yeast).